Reading from the N-terminus, the 382-residue chain is Pyrimidine monooxygenase RutA (382 aa).

Residues 68-69 (IK), Asn134, Glu143, 159-160 (RY), and Ser209 each bind FMN.

This sequence belongs to the NtaA/SnaA/DszA monooxygenase family. RutA subfamily.

The enzyme catalyses uracil + FMNH2 + NADH + O2 = (Z)-3-ureidoacrylate + FMN + NAD(+) + H2O + H(+). The catalysed reaction is thymine + FMNH2 + NADH + O2 = (Z)-2-methylureidoacrylate + FMN + NAD(+) + H2O + H(+). In terms of biological role, catalyzes the pyrimidine ring opening between N-3 and C-4 by an unusual flavin hydroperoxide-catalyzed mechanism, adding oxygen atoms in the process to yield ureidoacrylate peracid, that immediately reacts with FMN forming ureidoacrylate and FMN-N(5)-oxide. The FMN-N(5)-oxide reacts spontaneously with NADH to produce FMN. Requires the flavin reductase RutF to regenerate FMN in vivo. The sequence is that of Pyrimidine monooxygenase RutA from Escherichia coli O8 (strain IAI1).